Here is a 344-residue protein sequence, read N- to C-terminus: Heat-inducible transcription repressor HrcA (344 aa).

The protein belongs to the HrcA family.

In terms of biological role, negative regulator of class I heat shock genes (grpE-dnaK-dnaJ and groELS operons). Prevents heat-shock induction of these operons. This is Heat-inducible transcription repressor HrcA from Desulforudis audaxviator (strain MP104C).